The following is a 537-amino-acid chain: MIPINISPATVVLCGSIVTVSIAYVIFVVGHRRKGFPPGPPTLPVIGNIHQLPTTGAHFKFTEWAQKYGGIYSLKLGTGTALVITDREIVKKLMDKKSSITSDRPPSYVSYDLITKGDHLLVMHYNETWRKIRKYMHQFFRESECEKKHITLQDAEATQMMLEFLETPDNHNLHTKRFSNSIISTLLFGLRTPTYDSPHAKHLYDIMERWSAVMEPGNTPPVDIYPIFKYIPESLFGNWISRASGVGRDMERLYANMISQFKIRAEDPKISRTHESFFDILLREQEKTREFTDHEIAFIGGVQLEGGSDTSASILTAFVQAMVNWPEVQRVAQEEIDRVIGEDRSPTWNDFAALPYINAIMKETHRWRPVTPLSFPHCLTKDEYLDGFLLPKGATIILNVWGIQNDESVYPRPEEFDPSRFKDHKLLAPEYAVSDWKLRDHYSFGVGRRICPGIHLAERNVWLGVAKLLWAFKFEKATGADGQPIEMNVDPKTGYTEGFLHCALPFKCKVTVRSEERRKTILKEFELAKQVFNEYTG.

Residues 9 to 29 (ATVVLCGSIVTVSIAYVIFVV) form a helical membrane-spanning segment. N126 carries N-linked (GlcNAc...) asparagine glycosylation. Position 451 (C451) interacts with heme.

The protein belongs to the cytochrome P450 family. It depends on heme as a cofactor.

The protein localises to the membrane. Its pathway is secondary metabolite biosynthesis; terpenoid biosynthesis. In terms of biological role, cytochrome P450 monooxygenase; part of the gene cluster that mediates the biosynthesis of sesquiterpenyl epoxy-cyclohexenoids (SECs) such as anthrobotrisins and arthrosporols, metabolites that possess a novel hybrid carbon skeleton consisting of a polyketide-derived epoxycyclohexenol combined with a terpenoid-derived monocyclic sesquiterpenol substructure (PKS-PTS hybrid). The SEC pathway plays an important role for fungal soil colonization via decreasing fungal nematode-capturing ability. Within the pathway, the cytochrome P450 monooxygenase AOL_s00215g282 acts as a m-cresol hydrolase that converts m-cresol to toluquinol. The pathway begins with the biosynthesis of 6-methylsalicylic acid (6-MSA), the first precursor of the polyketide-derived epoxycyclohexenol in arthrosporols, by the polyketide synthase (PKS) AOL_s00215g283 via condensation of 1 acetate and 3 malonate units. The 6-methylsalicylic acid decarboxylase AOL_s00215g281 then catalyzes the decarboxylation of 6-methylsalicylic acid to yield m-cresol. The cytochrome P450 monooxygenase AOL_s00215g282 further oxidizes m-cresol to yield toluquinol. With the assistance of the oxidoreductase AOL_s00215g277, the polyprenyl transferase AOL_s00215g276 catalyzes the farnesylation of toluquinol to produce farnesyl hydroquinone, the hybrid precursor for biosynthesis of SECs. Farnesyl hydroquinone undergoes epoxidation and then subsequent dehydrogenation to form farnesyl epoxy-quinone, the first and simplest SEC. The cytochrome P450 monooxygenase AOL_s00215g278 and the FAD-dependent monooxygenase AOL_s00215g279 might be involved in the oxygenation of the phenol moiety, most likely in the epoxy formation. The cytochrome P450 monooxygenases AOL_s00215g274 and AOL_s00215g280 are involved in specific regional ketone reductions at respectively C-4 and C-1 of farnesyl epoxy-quinone PubMed:33823587. In Arthrobotrys oligospora (strain ATCC 24927 / CBS 115.81 / DSM 1491) (Nematode-trapping fungus), this protein is Cytochrome P450 monooxygenase AOL_s00215g282.